A 1009-amino-acid polypeptide reads, in one-letter code: Glutamate receptor ionotropic, delta-2 (1009 aa).

A signal peptide spans 1–23 (MKVFPAVLFLITFWSLEWEPVLP). Topologically, residues 24–566 (DSIIHIGAIF…DMFACLAPFD (543 aa)) are extracellular. Asn293, Asn306, Asn390, and Asn426 each carry an N-linked (GlcNAc...) asparagine glycan. Ca(2+)-binding residues include Glu531, Val534, and Asp535. A helical transmembrane segment spans residues 567–587 (LSLWACIAGTVLLVGTLVYLL). Over 588 to 635 (NWLNPPRLPMGSVSSTTLYNSMWFVYGSFVQQGGEVPYTTLATRMMMG) the chain is Cytoplasmic. Residues 636–656 (VWWLFALIVISSYTANLAAFL) form a helical membrane-spanning segment. The Extracellular portion of the chain corresponds to 657 to 830 (TISRIENSIQ…KSGSALDIHS (174 aa)). N-linked (GlcNAc...) asparagine glycosylation occurs at Asn713. Asp753, Asp755, and Ser757 together coordinate Ca(2+). Residues 831-851 (FAGVFFVLAAGVVLSCLIATV) form a helical membrane-spanning segment. Topologically, residues 852 to 1009 (ETWWTRRKGS…GNDPDRGTSI (158 aa)) are cytoplasmic. The segment at 989–1009 (YQPTPAPNFSYGNDPDRGTSI) is disordered.

This sequence belongs to the glutamate-gated ion channel (TC 1.A.10.1) family. GRID2 subfamily. Tetramer; dimer of dimers. In terms of tissue distribution, expressed in cerebellar Purkinje cells, in crest cells in the medial octavolateral nucleus and in type I neurons of the optic tectum.

It is found in the postsynaptic cell membrane. It carries out the reaction Ca(2+)(in) = Ca(2+)(out). It catalyses the reaction Na(+)(in) = Na(+)(out). In terms of biological role, member of the ionotropic glutamate receptor family, which plays a crucial role in synaptic organization and signal transduction in the central nervous system. Although it shares structural features with ionotropic glutamate receptors, does not bind glutamate as a primary ligand. Promotes synaptogenesis and mediates the D-Serine-dependent long term depression signals and AMPA receptor endocytosis of cerebellar parallel fiber-Purkinje cell (PF-PC) synapses through the NRX1B-CBLN1-GRID2 triad complex. In the presence of neurexins and cerebellins, forms cation-selective channels that are proposed to be gated by glycine and D-serine. However, recent research disputes this ligand-gated cation channel activity. Cation-selective ion channel activity can be triggered by GRM1 in Purkinje cells. The sequence is that of Glutamate receptor ionotropic, delta-2 from Danio rerio (Zebrafish).